Here is a 2281-residue protein sequence, read N- to C-terminus: Protein Ycf2 (2281 aa).

1635–1642 (GSIGSGRS) provides a ligand contact to ATP.

Belongs to the Ycf2 family.

It is found in the plastid. The protein localises to the chloroplast stroma. Functionally, probable ATPase of unknown function. Its presence in a non-photosynthetic plant (Epifagus virginiana) and experiments in tobacco indicate that it has an essential function which is probably not related to photosynthesis. The polypeptide is Protein Ycf2 (Coffea arabica (Arabian coffee)).